The primary structure comprises 304 residues: Tyrosine recombinase XerC (304 aa).

Positions 6 to 92 constitute a Core-binding (CB) domain; sequence NKLYLQAQAY…VLRQWFAYLV (87 aa). Residues 113-292 form the Tyr recombinase domain; it reads HLPKNIDAER…DFQHLAKIYD (180 aa). Active-site residues include arginine 152, lysine 176, histidine 244, arginine 247, and histidine 270. Tyrosine 279 functions as the O-(3'-phospho-DNA)-tyrosine intermediate in the catalytic mechanism.

This sequence belongs to the 'phage' integrase family. XerC subfamily. Forms a cyclic heterotetrameric complex composed of two molecules of XerC and two molecules of XerD.

It localises to the cytoplasm. In terms of biological role, site-specific tyrosine recombinase, which acts by catalyzing the cutting and rejoining of the recombining DNA molecules. The XerC-XerD complex is essential to convert dimers of the bacterial chromosome into monomers to permit their segregation at cell division. It also contributes to the segregational stability of plasmids. This chain is Tyrosine recombinase XerC, found in Haemophilus ducreyi (strain 35000HP / ATCC 700724).